Reading from the N-terminus, the 400-residue chain is Homoserine O-acetyltransferase (400 aa).

One can recognise an AB hydrolase-1 domain in the interval Asn64–Asp374. The active-site Nucleophile is the Ser169. Arg239 serves as a coordination point for substrate. Residues Asp335 and His368 contribute to the active site. Asp369 is a binding site for substrate.

It belongs to the AB hydrolase superfamily. MetX family. Homodimer.

The protein resides in the cytoplasm. It catalyses the reaction L-homoserine + acetyl-CoA = O-acetyl-L-homoserine + CoA. It functions in the pathway amino-acid biosynthesis; L-methionine biosynthesis via de novo pathway; O-acetyl-L-homoserine from L-homoserine: step 1/1. Its function is as follows. Transfers an acetyl group from acetyl-CoA to L-homoserine, forming acetyl-L-homoserine. The chain is Homoserine O-acetyltransferase from Rhodopseudomonas palustris (strain ATCC BAA-98 / CGA009).